Consider the following 228-residue polypeptide: Probable septum site-determining protein MinC (228 aa).

This sequence belongs to the MinC family. As to quaternary structure, interacts with MinD and FtsZ.

Its function is as follows. Cell division inhibitor that blocks the formation of polar Z ring septums. Rapidly oscillates between the poles of the cell to destabilize FtsZ filaments that have formed before they mature into polar Z rings. Prevents FtsZ polymerization. This Yersinia pseudotuberculosis serotype O:1b (strain IP 31758) protein is Probable septum site-determining protein MinC.